A 353-amino-acid polypeptide reads, in one-letter code: UPF0283 membrane protein YcjF (353 aa).

3 helical membrane-spanning segments follow: residues 70–90, 100–120, and 213–233; these read MVMGGLALFGASVVGQGIQWT, VALGGCAAGALIIGAGVGSVV, and ESTLMIAVSPLALVDMAFIAW.

This sequence belongs to the UPF0283 family.

The protein localises to the cell inner membrane. This chain is UPF0283 membrane protein YcjF, found in Shigella flexneri serotype 5b (strain 8401).